The sequence spans 442 residues: Tryptophan synthase beta chain 2 (442 aa).

N6-(pyridoxal phosphate)lysine is present on Lys122.

Belongs to the TrpB family. As to quaternary structure, tetramer of two alpha and two beta chains. Requires pyridoxal 5'-phosphate as cofactor.

It carries out the reaction (1S,2R)-1-C-(indol-3-yl)glycerol 3-phosphate + L-serine = D-glyceraldehyde 3-phosphate + L-tryptophan + H2O. Its pathway is amino-acid biosynthesis; L-tryptophan biosynthesis; L-tryptophan from chorismate: step 5/5. Functionally, the beta subunit is responsible for the synthesis of L-tryptophan from indole and L-serine. This chain is Tryptophan synthase beta chain 2 (trpB2), found in Methanosarcina mazei (strain ATCC BAA-159 / DSM 3647 / Goe1 / Go1 / JCM 11833 / OCM 88) (Methanosarcina frisia).